The primary structure comprises 1928 residues: Lactase/phlorizin hydrolase (1928 aa).

An N-terminal signal peptide occupies residues 1–21 (MELPWTALFLSTVLLGLSCQG). Residues 22-867 (SDWESDRNFI…LPVRADFTSR (846 aa)) constitute a propeptide, XBetaGly. Residues 22–1883 (SDWESDRNFI…LMLGIAEAQT (1862 aa)) are Extracellular-facing. The interval 46–289 (NYPPGKQGSD…FIYTLKLEDC (244 aa)) is glycosyl hydrolase-1 1; Region I. The interval 364-856 (VWAAFANQSR…GFSAKKVKRN (493 aa)) is glycosyl hydrolase-1 2; Region II. Residues N370, N514, N824, N936, N948, N991, and N1037 are each glycosylated (N-linked (GlcNAc...) asparagine). The glycosyl hydrolase-1 3; Region III. Phlorizin hydrolase/Glycosylceramidase activity stretch occupies residues 904-1367 (RFRDDFLWGV…DLIANNGMPL (464 aa)). The Proton donor; for phlorizin hydrolase/Glycosylceramidase activity role is filled by E1067. Residues N1176 and N1240 are each glycosylated (N-linked (GlcNAc...) asparagine). E1274 functions as the Nucleophile; for phlorizin hydrolase/Glycosylceramidase activity in the catalytic mechanism. Residues N1281 and N1509 are each glycosylated (N-linked (GlcNAc...) asparagine). Positions 1374–1847 (LYGEFPKGFI…CNGFPDPAQG (474 aa)) are glycosyl hydrolase-1 4; Region IV. Lactase activity. E1539 acts as the Proton donor; for lactase activity in catalysis. N-linked (GlcNAc...) asparagine glycans are attached at residues N1657 and N1684. The Nucleophile; for lactase activity role is filled by E1750. N1762 and N1815 each carry an N-linked (GlcNAc...) asparagine glycan. Residues 1884 to 1902 (ALYVLFALLLLGACSLAFL) form a helical membrane-spanning segment. The Cytoplasmic portion of the chain corresponds to 1903 to 1928 (TYNTGRRSKQGNAQPSQHQLSPISSF).

This sequence belongs to the glycosyl hydrolase 1 family. In terms of assembly, homodimer. N-glycosylated. In terms of tissue distribution, intestine.

The protein localises to the apical cell membrane. It catalyses the reaction lactose + H2O = beta-D-galactose + D-glucose. The catalysed reaction is phlorizin + H2O = phloretin + beta-D-glucose. It carries out the reaction D-cellobiose + H2O = beta-D-glucose + D-glucose. The enzyme catalyses quercetin 4'-O-beta-D-glucoside + H2O = quercetin + beta-D-glucose. It catalyses the reaction quercetin 3-O-beta-D-glucoside + H2O = quercetin + beta-D-glucose. The catalysed reaction is kaempferol 3-O-beta-D-glucoside + H2O = kaempferol + beta-D-glucose. It carries out the reaction luteolin 7-O-beta-D-glucoside + H2O = luteolin + beta-D-glucose. The enzyme catalyses luteolin 4'-O-beta-D-glucoside + H2O = luteolin + beta-D-glucose. It catalyses the reaction (2S)-naringenin 7-O-beta-D-glucoside + H2O = (2S)-naringenin + beta-D-glucose. The catalysed reaction is eriodictyol-7-O-beta-D-glucoside + H2O = (S)-eriodictyol + beta-D-glucose. It carries out the reaction apigenin 7-O-beta-D-glucoside + H2O = apigenin + beta-D-glucose. The enzyme catalyses daidzein 7-O-beta-D-glucoside + H2O = daidzein + beta-D-glucose + H(+). It catalyses the reaction genistein 7-O-beta-D-glucoside + H2O = genistein + beta-D-glucose. The catalysed reaction is a beta-D-galactosyl-N-acylsphingosine + H2O = a ceramide + beta-D-galactose.. It carries out the reaction beta-D-glucosyl-(1&lt;-&gt;1')-N-hexadecanoylsphing-4-enine + H2O = N-hexadecanoylsphing-4-enine + beta-D-glucose. The enzyme catalyses beta-D-galactosyl-(1&lt;-&gt;1')-N-hexadecanoylsphing-4-enine + H2O = beta-D-galactose + N-hexadecanoylsphing-4-enine. It catalyses the reaction beta-D-galactosyl-(1&lt;-&gt;1')-N-hexadecanoylsphinganine + H2O = N-hexadecanoylsphinganine + beta-D-galactose. The catalysed reaction is beta-D-glucosyl-(1&lt;-&gt;1')-N-hexadecanoylsphinganine + H2O = N-hexadecanoylsphinganine + beta-D-glucose. Broad specificity glycosidase of the intestinal brush border membrane that hydrolyzes lactose, the main sugar in mammalian milk, to produce D-glucose and D-galactose. The mature protein is composed of two domains that catalyze the hydrolysis of beta-glucopyranosides and beta-galactopyranosides, with a preference for hydrophilic aglycones (in lactose and cellobiose) for one domain and hydrophobic aglycones (in phlorizin and glycosylceramides) for the other. The chain is Lactase/phlorizin hydrolase from Rattus norvegicus (Rat).